Consider the following 288-residue polypeptide: Ankyrin repeat and SOCS box protein 8 (288 aa).

Ser17 bears the Phosphoserine mark. ANK repeat units lie at residues 52–81 (GTLK…EVNA), 85–113 (YNRT…NPNA), 117–146 (NRDT…SVNA), and 150–179 (NNDT…EVRV). The SOCS box domain occupies 235 to 288 (QLCEKLTVLCSAPGTLKTLSRYAVRRSLGLQYLPDAVKGLPLPASLKEYLLLIE).

It belongs to the ankyrin SOCS box (ASB) family. As to quaternary structure, interacts with TBK1; this interaction promotes TBK1 proteasomal degradation. In terms of processing, phosphorylated by TBK1.

Its subcellular location is the cytoplasm. It participates in protein modification; protein ubiquitination. May be a substrate-recognition component of a SCF-like ECS (Elongin-Cullin-SOCS-box protein) E3 ubiquitin-protein ligase complex which mediates the ubiquitination and subsequent proteasomal degradation of target proteins. Inhibits IFN-beta production through the IRF3 signaling pathway by targeting TBK1 via 'Lys-48'-linked ubiquitination, leading to its proteasomal degradation. The chain is Ankyrin repeat and SOCS box protein 8 (ASB8) from Bos taurus (Bovine).